Reading from the N-terminus, the 393-residue chain is Cytochrome b (393 aa).

The Mitochondrial matrix segment spans residues 1 to 33 (MTIRNQRFSLLKQPISSTLNQHLVDYPTPSNLS). The helical transmembrane segment at 34–57 (YWWGFGSLAGICLVIQIVTGVFLA) threads the bilayer. Residues 58-80 (MHYTPHVDLAFNSVEHIMRDVEG) are Mitochondrial intermembrane-facing. A helical membrane pass occupies residues 81–108 (GWLLRYMHANGASMFFIVVYLHIFRGLY). 2 residues coordinate heme b: histidine 88 and histidine 102. Over 109–116 (YASYSSPR) the chain is Mitochondrial matrix. Residues 117 to 141 (EFVWCLGVVIFLLMIVTAFIGYVLP) traverse the membrane as a helical segment. Residues 142 to 178 (WGQMSFWGATVITSLASAIPVVGDTIVTWLWGGFSVD) are Mitochondrial intermembrane-facing. A helical membrane pass occupies residues 179–210 (NATLNRFFSLHYLLPFILVGASLLHLAALHQY). Heme b is bound by residues histidine 189 and histidine 203. Histidine 208 is a binding site for a ubiquinone. The Mitochondrial matrix portion of the chain corresponds to 211 to 229 (GSNNPLGVHSEMDKIAFYP). The helical transmembrane segment at 230–252 (YFYVKDLVGWVAFAIFFSIWIFY) threads the bilayer. At 253-293 (APNVLGHPDNYIPANPMSTPPHIVPEWYFLPIYAILRSIPD) the chain is on the mitochondrial intermembrane side. Residues 294-314 (KAGGVAAIALVFICLLALPFF) traverse the membrane as a helical segment. Residues 315-325 (KSMYVRSSSFR) lie on the Mitochondrial matrix side of the membrane. Residues 326-346 (PIYQGMFWLLLADCLLLGWIG) form a helical membrane-spanning segment. Topologically, residues 347–353 (CQPVEAP) are mitochondrial intermembrane. Residues 354-370 (FVTIGQISSLVFFLFFA) traverse the membrane as a helical segment. Topologically, residues 371–393 (ITPILGRVGRGIPNSYTDETDHT) are mitochondrial matrix.

It belongs to the cytochrome b family. In terms of assembly, component of the ubiquinol-cytochrome c oxidoreductase (cytochrome b-c1 complex, complex III, CIII), a multisubunit enzyme composed of 10 subunits. The complex is composed of 3 respiratory subunits cytochrome b (MT-CYB), cytochrome c1 (CYC1-1 or CYC1-2) and Rieske protein (UCR1-1 or UCR1-2), 2 core protein subunits MPPalpha1 (or MPPalpha2) and MPPB, and 5 low-molecular weight protein subunits QCR7-1 (or QCR7-2), UCRQ-1 (or UCRQ-2), QCR9, UCRY and probably QCR6-1 (or QCR6-2). The complex exists as an obligatory dimer and forms supercomplexes (SCs) in the inner mitochondrial membrane with NADH-ubiquinone oxidoreductase (complex I, CI), resulting in different assemblies (supercomplexes SCI(1)III(2) and SCI(2)III(4)). The cofactor is heme b.

Its subcellular location is the mitochondrion inner membrane. In terms of biological role, component of the ubiquinol-cytochrome c oxidoreductase, a multisubunit transmembrane complex that is part of the mitochondrial electron transport chain which drives oxidative phosphorylation. The respiratory chain contains 3 multisubunit complexes succinate dehydrogenase (complex II, CII), ubiquinol-cytochrome c oxidoreductase (cytochrome b-c1 complex, complex III, CIII) and cytochrome c oxidase (complex IV, CIV), that cooperate to transfer electrons derived from NADH and succinate to molecular oxygen, creating an electrochemical gradient over the inner membrane that drives transmembrane transport and the ATP synthase. The cytochrome b-c1 complex catalyzes electron transfer from ubiquinol to cytochrome c, linking this redox reaction to translocation of protons across the mitochondrial inner membrane, with protons being carried across the membrane as hydrogens on the quinol. In the process called Q cycle, 2 protons are consumed from the matrix, 4 protons are released into the intermembrane space and 2 electrons are passed to cytochrome c. Cytochrome b is a catalytic core subunit containing 2 b-type hemes BL and BH topographically segregated in the quinone reduction (Qi) and quinol oxidation (Q0) sites on opposite sides of the membrane. In Arabidopsis thaliana (Mouse-ear cress), this protein is Cytochrome b (MT-CYB).